Here is a 184-residue protein sequence, read N- to C-terminus: Photosystem I assembly protein Ycf4 (184 aa).

2 helical membrane-spanning segments follow: residues 21–43 (NFCWAFILLFGALGFFFVGFSSY) and 58–80 (LFIPQGIVMCFYGIAGLFISFYL).

The protein belongs to the Ycf4 family.

The protein resides in the plastid. The protein localises to the chloroplast thylakoid membrane. Seems to be required for the assembly of the photosystem I complex. In Marchantia polymorpha (Common liverwort), this protein is Photosystem I assembly protein Ycf4.